The primary structure comprises 378 residues: Queuine tRNA-ribosyltransferase (378 aa).

The active-site Proton acceptor is the aspartate 90. Residues 90-94 (DSGGF), aspartate 144, glutamine 188, and glycine 220 each bind substrate. Residues 251 to 257 (GVGTPED) are RNA binding. The Nucleophile role is filled by aspartate 270. The tract at residues 275–279 (TRNAR) is RNA binding; important for wobble base 34 recognition. Residues cysteine 308, cysteine 310, cysteine 313, and histidine 339 each contribute to the Zn(2+) site.

The protein belongs to the queuine tRNA-ribosyltransferase family. As to quaternary structure, homodimer. Within each dimer, one monomer is responsible for RNA recognition and catalysis, while the other monomer binds to the replacement base PreQ1. Zn(2+) serves as cofactor.

It carries out the reaction 7-aminomethyl-7-carbaguanine + guanosine(34) in tRNA = 7-aminomethyl-7-carbaguanosine(34) in tRNA + guanine. Its pathway is tRNA modification; tRNA-queuosine biosynthesis. In terms of biological role, catalyzes the base-exchange of a guanine (G) residue with the queuine precursor 7-aminomethyl-7-deazaguanine (PreQ1) at position 34 (anticodon wobble position) in tRNAs with GU(N) anticodons (tRNA-Asp, -Asn, -His and -Tyr). Catalysis occurs through a double-displacement mechanism. The nucleophile active site attacks the C1' of nucleotide 34 to detach the guanine base from the RNA, forming a covalent enzyme-RNA intermediate. The proton acceptor active site deprotonates the incoming PreQ1, allowing a nucleophilic attack on the C1' of the ribose to form the product. After dissociation, two additional enzymatic reactions on the tRNA convert PreQ1 to queuine (Q), resulting in the hypermodified nucleoside queuosine (7-(((4,5-cis-dihydroxy-2-cyclopenten-1-yl)amino)methyl)-7-deazaguanosine). The polypeptide is Queuine tRNA-ribosyltransferase (Nautilia profundicola (strain ATCC BAA-1463 / DSM 18972 / AmH)).